We begin with the raw amino-acid sequence, 276 residues long: NADPH-dependent 7-cyano-7-deazaguanine reductase (276 aa).

Residue 83–85 coordinates substrate; that stretch reads IES. Residue 85–86 coordinates NADPH; the sequence is SK. Residue C184 is the Thioimide intermediate of the active site. Residue D191 is the Proton donor of the active site. Residue 223-224 participates in substrate binding; the sequence is HE. Position 252 to 253 (252 to 253) interacts with NADPH; the sequence is RG.

This sequence belongs to the GTP cyclohydrolase I family. QueF type 2 subfamily. As to quaternary structure, homodimer.

Its subcellular location is the cytoplasm. The catalysed reaction is 7-aminomethyl-7-carbaguanine + 2 NADP(+) = 7-cyano-7-deazaguanine + 2 NADPH + 3 H(+). Its pathway is tRNA modification; tRNA-queuosine biosynthesis. Functionally, catalyzes the NADPH-dependent reduction of 7-cyano-7-deazaguanine (preQ0) to 7-aminomethyl-7-deazaguanine (preQ1). In Pseudomonas aeruginosa (strain LESB58), this protein is NADPH-dependent 7-cyano-7-deazaguanine reductase.